A 75-amino-acid chain; its full sequence is Translational regulator CsrA (75 aa).

This sequence belongs to the CsrA/RsmA family. As to quaternary structure, homodimer; the beta-strands of each monomer intercalate to form a hydrophobic core, while the alpha-helices form wings that extend away from the core. Interacts with FliW.

The protein localises to the cytoplasm. Functionally, a translational regulator that binds mRNA to regulate translation initiation and/or mRNA stability. Usually binds in the 5'-UTR at or near the Shine-Dalgarno sequence preventing ribosome-binding, thus repressing translation. Its function is probably anatagonized by FliW. Inhibits translation of flaA mRNA in vitro. Involved in post-transcriptional regulation of flagellin biosynthesis. The sequence is that of Translational regulator CsrA from Campylobacter jejuni subsp. jejuni serotype O:6 (strain 81116 / NCTC 11828).